A 702-amino-acid chain; its full sequence is Ribosomal RNA large subunit methyltransferase K/L (702 aa).

Positions 43 to 154 (LIYQSLMWSR…KETAHISLDL (112 aa)) constitute a THUMP domain.

The protein belongs to the methyltransferase superfamily. RlmKL family.

It localises to the cytoplasm. The catalysed reaction is guanosine(2445) in 23S rRNA + S-adenosyl-L-methionine = N(2)-methylguanosine(2445) in 23S rRNA + S-adenosyl-L-homocysteine + H(+). It catalyses the reaction guanosine(2069) in 23S rRNA + S-adenosyl-L-methionine = N(2)-methylguanosine(2069) in 23S rRNA + S-adenosyl-L-homocysteine + H(+). Its function is as follows. Specifically methylates the guanine in position 2445 (m2G2445) and the guanine in position 2069 (m7G2069) of 23S rRNA. This chain is Ribosomal RNA large subunit methyltransferase K/L, found in Enterobacter sp. (strain 638).